The primary structure comprises 439 residues: Serine/threonine-protein kinase 2 (439 aa).

Positions 87-439 (NDDFYHISTG…IFSDWINGRN (353 aa)) constitute a Protein kinase domain. ATP contacts are provided by residues 93–101 (ISTGGYGIV) and Lys117. Asp307 (proton acceptor) is an active-site residue.

It belongs to the protein kinase superfamily. Ser/Thr protein kinase family. Poxviruses subfamily. Post-translationally, phosphorylated in vivo. Autophosphorylated in vitro.

The protein resides in the host endoplasmic reticulum. It is found in the host endoplasmic reticulum-Golgi intermediate compartment. It carries out the reaction L-seryl-[protein] + ATP = O-phospho-L-seryl-[protein] + ADP + H(+). The catalysed reaction is L-threonyl-[protein] + ATP = O-phospho-L-threonyl-[protein] + ADP + H(+). Its function is as follows. Essential serine-protein kinase involved in the early stage of virion morphogenesis. The protein is Serine/threonine-protein kinase 2 (OPG054) of Homo sapiens (Human).